Consider the following 204-residue polypeptide: Guanylate kinase (204 aa).

The region spanning 3–181 (GTLYIVSAAS…AVSEMSAIFT (179 aa)) is the Guanylate kinase-like domain. 10–17 (AASGTGKS) serves as a coordination point for ATP.

The protein belongs to the guanylate kinase family.

The protein resides in the cytoplasm. The catalysed reaction is GMP + ATP = GDP + ADP. Its function is as follows. Essential for recycling GMP and indirectly, cGMP. In Xylella fastidiosa (strain 9a5c), this protein is Guanylate kinase (gmk).